The primary structure comprises 180 residues: Large ribosomal subunit protein uL5 (180 aa).

This sequence belongs to the universal ribosomal protein uL5 family. In terms of assembly, part of the 50S ribosomal subunit; part of the 5S rRNA/L5/L18/L25 subcomplex. Contacts the 5S rRNA and the P site tRNA. Forms a bridge to the 30S subunit in the 70S ribosome.

In terms of biological role, this is one of the proteins that bind and probably mediate the attachment of the 5S RNA into the large ribosomal subunit, where it forms part of the central protuberance. In the 70S ribosome it contacts protein S13 of the 30S subunit (bridge B1b), connecting the 2 subunits; this bridge is implicated in subunit movement. Contacts the P site tRNA; the 5S rRNA and some of its associated proteins might help stabilize positioning of ribosome-bound tRNAs. This Lactococcus lactis subsp. lactis (strain IL1403) (Streptococcus lactis) protein is Large ribosomal subunit protein uL5.